The primary structure comprises 34 residues: uncharacterized protein (34 aa).

This is an uncharacterized protein from Acidianus two-tailed virus (ATV).